Reading from the N-terminus, the 446-residue chain is Argininosuccinate lyase (446 aa).

The protein belongs to the lyase 1 family. Argininosuccinate lyase subfamily.

It localises to the cytoplasm. The catalysed reaction is 2-(N(omega)-L-arginino)succinate = fumarate + L-arginine. It participates in amino-acid biosynthesis; L-arginine biosynthesis; L-arginine from L-ornithine and carbamoyl phosphate: step 3/3. This Sulfurisphaera tokodaii (strain DSM 16993 / JCM 10545 / NBRC 100140 / 7) (Sulfolobus tokodaii) protein is Argininosuccinate lyase.